A 695-amino-acid chain; its full sequence is MADLSLYRNIGIFAHVDAGKTTTTERILKLTGKIHRLGEVHDGASTMDFMEQEAERGITIQSAATTCFWKGHRFNVIDTPGHVDFTVEVYRSLKVLDGGIGVFCGSGGVEPQSETNWRYANESEVSRLIFVNKLDRMGADFFRVVEQVKKVLGANPLVMTLPIGREDEFVGVVDVLTRQAYVWDDSGLPENFEVKEVPADMVDQVEEYREMMIETAVEQDDELMMAYMEGEEPTVEQIKACIRKGTRDLAFFPTFCGSAFKNKGMQLVLDAVVDYLPSPTEVEPQPLTDPATGEPTGEVATVSVDAPLKALAFKIMDDRFGALTFVRIYSGKIKKGDTILNSATGKTERIGRMVEMHANDRNEVESAQASDIIAIVGMKNVQTGHTLCDPKHECTLEPMIFPTPVISIAVKPKDKNGSEKMGIAIGKMVAEDPSFQVETDEDSGETILKGMGELHLDIKVDILKRTYGVELEVGAPQVAYRETITKAVEDSYTHKKQSGGSGQFGKIDYRIRPGEQNSGFTFKSTVVGGNVPKEFWPAVEKGFKSMMDTGTLAGFPVLDVEVELFDGGFHAVDSSAIAFEIAAKGAFRQSIPKAAPQLLEPIMKVDVFTPEDHVGDVIGDLNRRRGMIKDQEMGLTGVRVKADVPLSEMFGYIGSLRTMTSGRGQFSMEFSHYAPCPNNVAEQVIAEVKERNAKK.

In terms of domain architecture, tr-type G spans 5 to 280 (SLYRNIGIFA…AVVDYLPSPT (276 aa)). GTP is bound by residues 14–21 (AHVDAGKT), 78–82 (DTPGH), and 132–135 (NKLD).

The protein belongs to the TRAFAC class translation factor GTPase superfamily. Classic translation factor GTPase family. EF-G/EF-2 subfamily.

It localises to the cytoplasm. In terms of biological role, catalyzes the GTP-dependent ribosomal translocation step during translation elongation. During this step, the ribosome changes from the pre-translocational (PRE) to the post-translocational (POST) state as the newly formed A-site-bound peptidyl-tRNA and P-site-bound deacylated tRNA move to the P and E sites, respectively. Catalyzes the coordinated movement of the two tRNA molecules, the mRNA and conformational changes in the ribosome. This chain is Elongation factor G 2, found in Vibrio cholerae serotype O1 (strain ATCC 39315 / El Tor Inaba N16961).